The chain runs to 249 residues: 5'-nucleotidase SurE (249 aa).

Positions 9, 10, 40, and 92 each coordinate a divalent metal cation.

This sequence belongs to the SurE nucleotidase family. A divalent metal cation serves as cofactor.

The protein localises to the cytoplasm. It catalyses the reaction a ribonucleoside 5'-phosphate + H2O = a ribonucleoside + phosphate. In terms of biological role, nucleotidase that shows phosphatase activity on nucleoside 5'-monophosphates. The protein is 5'-nucleotidase SurE of Shewanella baltica (strain OS223).